Reading from the N-terminus, the 361-residue chain is uncharacterized protein (361 aa).

This is an uncharacterized protein from Methanothermobacter thermautotrophicus (Methanobacterium thermoformicicum).